The sequence spans 381 residues: Actin-binding Rho-activating protein (381 aa).

Disordered stretches follow at residues 39 to 156 and 179 to 207; these read ENSI…SHGS and QEEPTWRSDSVDTEDSGYGGEAEERPEQD. Polar residues predominate over residues 69 to 79; it reads PTSHQKAQSAP. Residues 97–110 are compositionally biased toward basic and acidic residues; the sequence is KAPEVSHIKKKEVS. Phosphoserine is present on residues serine 156 and serine 188. Positions 179 to 188 are enriched in basic and acidic residues; that stretch reads QEEPTWRSDS. Actin-binding regions lie at residues 199 to 299 and 300 to 381; these read EAEE…AERA and KRAE…TLLK. 2 interaction with actin regions span residues 240-285 and 352-381; these read SPVG…GDEG and MRARKHGLVDFEGEMLWQGRDDHVVITLLK.

Binds F-actin and ABLIM1, ABLIM2 and ABLIM3. Interaction with ABLIM2 and ABLIM3 enhances activity.

It localises to the cytoplasm. The protein localises to the myofibril. The protein resides in the sarcomere. Its subcellular location is the cytoskeleton. Functionally, acts as an activator of serum response factor (SRF)-dependent transcription possibly by inducing nuclear translocation of MKL1 or MKL2 and through a mechanism requiring Rho-actin signaling. This is Actin-binding Rho-activating protein from Homo sapiens (Human).